The following is a 389-amino-acid chain: Chalcone synthase 9 (389 aa).

The active site involves C164.

The protein belongs to the thiolase-like superfamily. Chalcone/stilbene synthases family.

The catalysed reaction is (E)-4-coumaroyl-CoA + 3 malonyl-CoA + 3 H(+) = 2',4,4',6'-tetrahydroxychalcone + 3 CO2 + 4 CoA. Its pathway is secondary metabolite biosynthesis; flavonoid biosynthesis. Its function is as follows. The primary product of this enzyme is 4,2',4',6'-tetrahydroxychalcone (also termed naringenin-chalcone or chalcone) which can under specific conditions spontaneously isomerize into naringenin. The sequence is that of Chalcone synthase 9 (CHS9) from Medicago sativa (Alfalfa).